A 146-amino-acid polypeptide reads, in one-letter code: Hemoglobin subunit beta-2 (146 aa).

The 145-residue stretch at Phe-2–His-146 folds into the Globin domain. Lys-17 is subject to N6-succinyllysine. Phosphoserine occurs at positions 44 and 50. Residue Lys-59 is modified to N6-succinyllysine. Heme b contacts are provided by His-63 and His-92. Asymmetric dimethylarginine is present on Arg-104.

This sequence belongs to the globin family. In terms of assembly, heterotetramer of two alpha chains and two beta chains. In terms of tissue distribution, red blood cells.

Its function is as follows. Involved in oxygen transport from the lung to the various peripheral tissues. The sequence is that of Hemoglobin subunit beta-2 (HBB2) from Panthera pardus saxicolor (Northern Persian leopard).